The sequence spans 1449 residues: ABC transporter G family member 21 (1449 aa).

Residues 1–10 (MEEYELREIA) are compositionally biased toward basic and acidic residues. The segment at 1–49 (MEEYELREIALQEGGSNLDINTPPNYDNPVGDGSSPPDSPDIQKSENQF) is disordered. Over residues 14 to 25 (GGSNLDINTPPN) the composition is skewed to polar residues. The region spanning 130–383 (ISFFNLFKPS…FIDLGFDCEP (254 aa)) is the ABC transporter 1 domain. The ABC transmembrane type-2 1 domain occupies 488–731 (WGDKFSLISR…ILSVEGKDYL (244 aa)). The next 5 helical transmembrane spans lie at 519–539 (IPGL…NAFL), 577–597 (IPLT…MFGL), 602–622 (GKFF…TNLF), 634–654 (ISQN…GYTI), and 747–767 (FITY…MEYF). Residues 818–1062 (FTWQNINYTV…LTSYFERYGV (245 aa)) form the ABC transporter 2 domain. 854–861 (GSSGAGKT) is a binding site for ATP. The ABC transmembrane type-2 2 domain maps to 1152 to 1386 (FYTYGSFIQS…PISEPLTGYV (235 aa)). Transmembrane regions (helical) follow at residues 1155–1175 (YGSF…FWSL), 1188–1208 (FIFE…PQFI), 1228–1248 (FAIS…TIFF), 1266–1286 (FYFW…GQAV), 1296–1316 (AHTL…VMVI), and 1423–1443 (LALI…FVYI).

This sequence belongs to the ABC transporter superfamily. ABCG family. PDR (TC 3.A.1.205) subfamily.

Its subcellular location is the membrane. This is ABC transporter G family member 21 (abcG21) from Dictyostelium discoideum (Social amoeba).